Consider the following 176-residue polypeptide: Calcium and integrin-binding family member 2 (176 aa).

EF-hand domains follow at residues 55–90 (RENP…LCES), 92–127 (PRDL…LTKS), and 133–168 (EVVL…APDF). Aspartate 105, asparagine 107, aspartate 109, aspartate 116, aspartate 146, aspartate 148, aspartate 150, lysine 152, and aspartate 157 together coordinate Ca(2+).

Monomer. Homodimer. Interacts with WHRN and MYO7A. Interacts with ITGA2B (via C-terminus cytoplasmic tail region); the interactions are stabilized/increased in a calcium and magnesium-dependent manner. Interacts with ITGA7 (via C-terminus cytoplasmic tail region); the interactions are stabilized/increased in a calcium and magnesium-dependent manner. Interacts with TMC1. Interacts with TMC2. As to expression, expressed in liver, heart, kidney, brain, spleen, stomach, ovary, testis and muscle.

It localises to the cytoplasm. It is found in the cell projection. The protein resides in the stereocilium. The protein localises to the photoreceptor inner segment. Its subcellular location is the cilium. It localises to the photoreceptor outer segment. It is found in the cell membrane. The protein resides in the sarcolemma. Its function is as follows. Calcium- and integrin-binding protein that plays a role in intracellular calcium homeostasis. Acts as an auxiliary subunit of the sensory mechanoelectrical transduction (MET) channel in hair cells. Essential for mechanoelectrical transduction (MET) currents in auditory hair cells and thereby required for hearing. Regulates the function of hair cell mechanotransduction by controlling the distribution of transmembrane channel-like proteins TMC1 and TMC2, and by regulating the function of the MET channels in hair cells. Required for the maintenance of auditory hair cell stereocilia bundle morphology and function and for hair-cell survival in the cochlea. Critical for proper photoreceptor cell maintenance and function. Plays a role in intracellular calcium homeostasis by decreasing ATP-induced calcium release. The sequence is that of Calcium and integrin-binding family member 2 (CIB2) from Ovis aries (Sheep).